A 680-amino-acid chain; its full sequence is Conserved oligomeric Golgi complex subunit 6 (680 aa).

A disordered region spans residues 479-517 (HKSKKSGQLPRRSRTSSDSSQLTSVDALLSSSPSPPQNN).

This sequence belongs to the COG6 family. As to quaternary structure, component of the conserved oligomeric Golgi complex which is composed of eight different subunits and is required for normal Golgi morphology and localization. Interacts with COG5, COG7 and COG8.

The protein localises to the golgi apparatus membrane. Required for normal Golgi function. The chain is Conserved oligomeric Golgi complex subunit 6 from Arabidopsis thaliana (Mouse-ear cress).